Consider the following 415-residue polypeptide: Multidrug resistance protein MdtA (415 aa).

An N-terminal signal peptide occupies residues 1 to 21 (MKGSYKSRWVIVIVVVIAAIA). Disordered stretches follow at residues 32–56 (SRSA…GMRA) and 392–415 (EAQS…GARS). Over residues 399–415 (SEEKATSREYAKKGARS) the composition is skewed to basic and acidic residues.

Belongs to the membrane fusion protein (MFP) (TC 8.A.1) family. As to quaternary structure, part of a tripartite efflux system composed of MdtA, MdtB and MdtC.

The protein resides in the cell inner membrane. In terms of biological role, the MdtABC tripartite complex confers resistance against novobiocin and deoxycholate. The chain is Multidrug resistance protein MdtA from Escherichia coli O7:K1 (strain IAI39 / ExPEC).